Reading from the N-terminus, the 38-residue chain is Potassium channel toxin alpha-KTx 3.3 (38 aa).

Cystine bridges form between Cys-8–Cys-28, Cys-14–Cys-33, and Cys-18–Cys-35. An interaction with Ca(2+)-activated K(+) channels region spans residues 26-33 (GKCMNRKC).

It belongs to the short scorpion toxin superfamily. Potassium channel inhibitor family. Alpha-KTx 03 subfamily. In terms of tissue distribution, expressed by the venom gland.

Its subcellular location is the secreted. Its function is as follows. Potent inhibitor of shaker potassium channels as well as the mammalian homologs of shaker. This chain is Potassium channel toxin alpha-KTx 3.3, found in Leiurus hebraeus (Hebrew deathstalker scorpion).